A 514-amino-acid chain; its full sequence is Peptide chain release factor 3 (514 aa).

The tr-type G domain maps to 8-268 (KKRRTFAIIS…SFLAFAPEPH (261 aa)). GTP contacts are provided by residues 17–24 (SHPDAGKT), 85–89 (DTPGH), and 139–142 (NKLD).

The protein belongs to the TRAFAC class translation factor GTPase superfamily. Classic translation factor GTPase family. PrfC subfamily.

It is found in the cytoplasm. Functionally, increases the formation of ribosomal termination complexes and stimulates activities of RF-1 and RF-2. It binds guanine nucleotides and has strong preference for UGA stop codons. It may interact directly with the ribosome. The stimulation of RF-1 and RF-2 is significantly reduced by GTP and GDP, but not by GMP. This Streptococcus mutans serotype c (strain ATCC 700610 / UA159) protein is Peptide chain release factor 3.